A 189-amino-acid polypeptide reads, in one-letter code: MDTEYEQVNKPWNELYKETTLGNKLTVNVGMEDQEVPLLPSNFLTKVRVGLSGGYITMRRIRIKIIPLVSRKAGVSGKLYLRDISDTKGRKLHCTESLDLGREIRLTMQHLDFSVSTRSDVPIVFGFEELVSPFLEGRELFSISVRWQFGLSKNCYSLPQSKWKVMYQEDALKVLKPSKKKASKTDSSV.

Belongs to the tombusvirus/aureusvirus movement protein p22 family. As to quaternary structure, interacts with host protein HFI22. In terms of processing, phosphorylated.

It is found in the host membrane. In terms of biological role, cell-to-cell movement. Displays RNA-binding activity. This chain is Movement protein p22, found in Capsicum annuum (Capsicum pepper).